The following is a 134-amino-acid chain: Aspartate 1-decarboxylase (134 aa).

Ser-25 serves as the catalytic Schiff-base intermediate with substrate; via pyruvic acid. The residue at position 25 (Ser-25) is a Pyruvic acid (Ser). Residue Thr-57 participates in substrate binding. Tyr-58 acts as the Proton donor in catalysis. 73–75 contacts substrate; that stretch reads GAA.

This sequence belongs to the PanD family. As to quaternary structure, heterooctamer of four alpha and four beta subunits. It depends on pyruvate as a cofactor. Is synthesized initially as an inactive proenzyme, which is activated by self-cleavage at a specific serine bond to produce a beta-subunit with a hydroxyl group at its C-terminus and an alpha-subunit with a pyruvoyl group at its N-terminus.

The protein localises to the cytoplasm. The catalysed reaction is L-aspartate + H(+) = beta-alanine + CO2. It functions in the pathway cofactor biosynthesis; (R)-pantothenate biosynthesis; beta-alanine from L-aspartate: step 1/1. Its function is as follows. Catalyzes the pyruvoyl-dependent decarboxylation of aspartate to produce beta-alanine. In Mycolicibacterium gilvum (strain PYR-GCK) (Mycobacterium gilvum (strain PYR-GCK)), this protein is Aspartate 1-decarboxylase.